Here is a 464-residue protein sequence, read N- to C-terminus: MLKIFNSYTRLQEQLEVDKKKTINMYVCGITAYDFCHIGHGRTFIFFDVVVRYLRSLGYALKYVRNITDIDDKIIAASLKNNESYISLSNRMISNMKDDFSALNILPPDSEPRVTENISDIIKFISILLNKKHAYVACNGDIMFSVSSYLNYGALSNQFSKILNKEINISHYSTKKNIADFALWKTSKSSIFVGWNSPWGNGRPGWHIECSSMCRSAFKNKIDIHGGGVDLLFPHHENELAQSVCIDSNFSIKHWMHTGLVIINNEKMSKSLNNTLLLRDLLTQYDSEIIRFFLLSTHYRHPLYFCYKNLSNSSKLLKKLYLSLRGVDFDIKGLDIVDNFKTDFYKAMNSDFNTPLALSILLRLSKEINKFKLIDSNKASQLASKLRQLGSILGILLKDPEYFLQNNFNCNNSIIGKINSLIYERDKARRVKDWVRADRIRKELLELGIVLEDTSFNTFWRSLQ.

Cys-28 provides a ligand contact to Zn(2+). The 'HIGH' region signature appears at 30-40; it reads ITAYDFCHIGH. Residues Cys-210, His-235, and Glu-239 each contribute to the Zn(2+) site. The short motif at 267–271 is the 'KMSKS' region element; it reads KMSKS. Residue Lys-270 coordinates ATP.

The protein belongs to the class-I aminoacyl-tRNA synthetase family. Monomer. It depends on Zn(2+) as a cofactor.

The protein resides in the cytoplasm. The catalysed reaction is tRNA(Cys) + L-cysteine + ATP = L-cysteinyl-tRNA(Cys) + AMP + diphosphate. This is Cysteine--tRNA ligase from Buchnera aphidicola subsp. Baizongia pistaciae (strain Bp).